The chain runs to 331 residues: 4-hydroxythreonine-4-phosphate dehydrogenase (331 aa).

Substrate is bound by residues His136 and Thr137. A divalent metal cation is bound by residues His166, His211, and His266. Substrate-binding residues include Lys274, Asn283, and Arg292.

Belongs to the PdxA family. Homodimer. The cofactor is Zn(2+). It depends on Mg(2+) as a cofactor. Requires Co(2+) as cofactor.

The protein localises to the cytoplasm. It catalyses the reaction 4-(phosphooxy)-L-threonine + NAD(+) = 3-amino-2-oxopropyl phosphate + CO2 + NADH. The protein operates within cofactor biosynthesis; pyridoxine 5'-phosphate biosynthesis; pyridoxine 5'-phosphate from D-erythrose 4-phosphate: step 4/5. In terms of biological role, catalyzes the NAD(P)-dependent oxidation of 4-(phosphooxy)-L-threonine (HTP) into 2-amino-3-oxo-4-(phosphooxy)butyric acid which spontaneously decarboxylates to form 3-amino-2-oxopropyl phosphate (AHAP). This chain is 4-hydroxythreonine-4-phosphate dehydrogenase, found in Thioalkalivibrio sulfidiphilus (strain HL-EbGR7).